Consider the following 368-residue polypeptide: MTKAIIPQPRPGIMEISPYVGGESKLAGVDRIIKLSSNEGALGASPRVRDALIASAGEAHRYPDGNATALREALGRTHGLDPARIVCGAGSDELIGLLCRAYAGPGDSIVQSAYGFLMYGIYARGVGAEPILAPESDLTADIDAMLAAVRDTTKLVFLANPNNPTGTCLPTSEVVRLREGLRDDIILVVDAAYAEYVERNDYDAGARLVDSHPNTVMLRTFSKIGLGGLRLGWSYGPAHIIDVLNRVRGPFNICGQALVAGEAALADPAFTDLSRAHNSLWREWTRAKLQAMGIRVGESSGNFVLATFDAEGPFTALAADAALRQQGIICRRVAGYGLPNCLRITIGRDDEMQAVVEALGAFMAGEGR.

The residue at position 223 (K223) is an N6-(pyridoxal phosphate)lysine.

This sequence belongs to the class-II pyridoxal-phosphate-dependent aminotransferase family. Histidinol-phosphate aminotransferase subfamily. As to quaternary structure, homodimer. Pyridoxal 5'-phosphate is required as a cofactor.

It catalyses the reaction L-histidinol phosphate + 2-oxoglutarate = 3-(imidazol-4-yl)-2-oxopropyl phosphate + L-glutamate. It participates in amino-acid biosynthesis; L-histidine biosynthesis; L-histidine from 5-phospho-alpha-D-ribose 1-diphosphate: step 7/9. This Rhodospirillum rubrum (strain ATCC 11170 / ATH 1.1.1 / DSM 467 / LMG 4362 / NCIMB 8255 / S1) protein is Histidinol-phosphate aminotransferase.